We begin with the raw amino-acid sequence, 177 residues long: Protein FATTY ACID EXPORT 4, chloroplastic (177 aa).

Residues 1–63 (MWSLALTLPS…AELSELAPVV (63 aa)) constitute a chloroplast transit peptide. 3 helical membrane-spanning segments follow: residues 85-105 (KGSL…YFLT), 111-131 (RVLG…VFGF), and 140-160 (VPAG…VMAY).

It belongs to the TMEM14 family.

It localises to the plastid. Its subcellular location is the chloroplast membrane. May be involved in free fatty acids export from the plastids. This is Protein FATTY ACID EXPORT 4, chloroplastic from Arabidopsis thaliana (Mouse-ear cress).